We begin with the raw amino-acid sequence, 102 residues long: uncharacterized protein (102 aa).

Residues 77–96 (FFSACVAKSYSSFFISICIL) traverse the membrane as a helical segment.

The protein localises to the membrane. This is an uncharacterized protein from Saccharomyces cerevisiae (strain ATCC 204508 / S288c) (Baker's yeast).